The following is a 185-amino-acid chain: Elongation factor P (185 aa).

This sequence belongs to the elongation factor P family.

It localises to the cytoplasm. It functions in the pathway protein biosynthesis; polypeptide chain elongation. Involved in peptide bond synthesis. Stimulates efficient translation and peptide-bond synthesis on native or reconstituted 70S ribosomes in vitro. Probably functions indirectly by altering the affinity of the ribosome for aminoacyl-tRNA, thus increasing their reactivity as acceptors for peptidyl transferase. The polypeptide is Elongation factor P (Nitrosomonas eutropha (strain DSM 101675 / C91 / Nm57)).